The sequence spans 113 residues: Protein NATD1 (113 aa).

The 91-residue stretch at 22 to 112 folds into the N-acetyltransferase domain; that stretch reads EHDRRRRQFT…PLPQYLERLQ (91 aa).

This sequence belongs to the NATD1 family.

The sequence is that of Protein NATD1 (NATD1) from Homo sapiens (Human).